The sequence spans 217 residues: Small ribosomal subunit protein uS3c (217 aa).

Residues 47–119 (VRTHIKSSSN…KLHIAIEKVA (73 aa)) form the KH type-2 domain.

It belongs to the universal ribosomal protein uS3 family. In terms of assembly, part of the 30S ribosomal subunit.

Its subcellular location is the plastid. The protein localises to the chloroplast. In Pinus koraiensis (Korean pine), this protein is Small ribosomal subunit protein uS3c (rps3).